A 612-amino-acid chain; its full sequence is Isocitrate dehydrogenase kinase/phosphatase (612 aa).

ATP-binding positions include 327–333 and K348; that span reads APGIKGL. The active site involves D383. Positions 593-612 are disordered; it reads AGAASNEQDAPDAGRSVRAA.

Belongs to the AceK family.

The protein localises to the cytoplasm. The catalysed reaction is L-seryl-[isocitrate dehydrogenase] + ATP = O-phospho-L-seryl-[isocitrate dehydrogenase] + ADP + H(+). Its function is as follows. Bifunctional enzyme which can phosphorylate or dephosphorylate isocitrate dehydrogenase (IDH) on a specific serine residue. This is a regulatory mechanism which enables bacteria to bypass the Krebs cycle via the glyoxylate shunt in response to the source of carbon. When bacteria are grown on glucose, IDH is fully active and unphosphorylated, but when grown on acetate or ethanol, the activity of IDH declines drastically concomitant with its phosphorylation. The chain is Isocitrate dehydrogenase kinase/phosphatase from Paraburkholderia xenovorans (strain LB400).